Reading from the N-terminus, the 101-residue chain is Small ribosomal subunit protein uS14 (101 aa).

Belongs to the universal ribosomal protein uS14 family. In terms of assembly, part of the 30S ribosomal subunit. Contacts proteins S3 and S10.

In terms of biological role, binds 16S rRNA, required for the assembly of 30S particles and may also be responsible for determining the conformation of the 16S rRNA at the A site. In Aeromonas salmonicida (strain A449), this protein is Small ribosomal subunit protein uS14.